The sequence spans 530 residues: Poly(U)-binding-splicing factor PUF60 (530 aa).

Residues 1–487 are inhibits homodimerization; it reads MATATIALGT…EDAEIIVKIF (487 aa). Residue K14 forms a Glycyl lysine isopeptide (Lys-Gly) (interchain with G-Cter in SUMO2) linkage. T31 carries the phosphothreonine modification. An inhibits transcriptional repression, interaction with ERCC3 and apoptosis induction region spans residues 48–530; the sequence is QSIKSVLVKQ…ERFDNSDLSA (483 aa). Residue K51 forms a Glycyl lysine isopeptide (Lys-Gly) (interchain with G-Cter in SUMO2) linkage. A Phosphoserine modification is found at S83. 2 RRM domains span residues 100 to 178 and 197 to 275; these read CRVY…RPSN and NRIY…KAVT. Residue S215 is modified to Phosphoserine. An N6-acetyllysine modification is found at K222. T285 is modified (phosphothreonine). The segment at 387-408 is disordered; it reads KKEKEEEELFPESERPEMLSEQ. K390 participates in a covalent cross-link: Glycyl lysine isopeptide (Lys-Gly) (interchain with G-Cter in SUMO2). Residues 398-408 show a composition bias toward basic and acidic residues; it reads ESERPEMLSEQ. K425 is subject to N6-acetyllysine. A Glycyl lysine isopeptide (Lys-Gly) (interchain with G-Cter in SUMO2) cross-link involves residue K429. The 88-residue stretch at 433-520 folds into the RRM 3; atypical domain; sequence TVMVLRNMVD…RKVVAEVYDQ (88 aa).

It belongs to the RRM half pint family. In terms of assembly, homodimer. Associates with the spliceosome. Found in a complex with RO60 and Y5 RNA. Found in a complex with FUBP1 and far upstream element (FUSE) DNA segment. Interacts directly with ERCC3. Interacts with CDK7 and GTF2H1. Interacts with SRSF11/P54. Interacts with ARGLU1; interaction may be involved in ARGLU1-mediated modulation of alternative splicing.

It localises to the nucleus. Its function is as follows. DNA- and RNA-binding protein, involved in several nuclear processes such as pre-mRNA splicing, apoptosis and transcription regulation. In association with FUBP1 regulates MYC transcription at the P2 promoter through the core-TFIIH basal transcription factor. Acts as a transcriptional repressor through the core-TFIIH basal transcription factor. Represses FUBP1-induced transcriptional activation but not basal transcription. Decreases ERCC3 helicase activity. Is also involved in pre-mRNA splicing. Promotes splicing of an intron with weak 3'-splice site and pyrimidine tract in a cooperative manner with U2AF2. Involved in apoptosis induction when overexpressed in HeLa cells. Modulates alternative splicing of several mRNAs. Binds to relaxed DNA of active promoter regions. Binds to the pyrimidine tract and 3'-splice site regions of pre-mRNA; binding is enhanced in presence of U2AF2. Binds to Y5 RNA in association with RO60. Binds to poly(U) RNA. The sequence is that of Poly(U)-binding-splicing factor PUF60 from Bos taurus (Bovine).